A 110-amino-acid polypeptide reads, in one-letter code: V-type proton ATPase subunit G 1 (110 aa).

It belongs to the V-ATPase G subunit family. V-ATPase is a heteromultimeric enzyme composed of a peripheral catalytic V1 complex (components A to H) attached to an integral membrane V0 proton pore complex (components: a, c, c', c'' and d).

Catalytic subunit of the peripheral V1 complex of vacuolar ATPase (V-ATPase). V-ATPase is responsible for acidifying a variety of intracellular compartments in eukaryotic cells. In Nicotiana tabacum (Common tobacco), this protein is V-type proton ATPase subunit G 1 (VATG1).